The sequence spans 274 residues: 2,3,4,5-tetrahydropyridine-2,6-dicarboxylate N-succinyltransferase (274 aa).

Substrate-binding residues include Arg105 and Asp142.

It belongs to the transferase hexapeptide repeat family. As to quaternary structure, homotrimer.

It localises to the cytoplasm. The catalysed reaction is (S)-2,3,4,5-tetrahydrodipicolinate + succinyl-CoA + H2O = (S)-2-succinylamino-6-oxoheptanedioate + CoA. The protein operates within amino-acid biosynthesis; L-lysine biosynthesis via DAP pathway; LL-2,6-diaminopimelate from (S)-tetrahydrodipicolinate (succinylase route): step 1/3. In Thiobacillus denitrificans (strain ATCC 25259 / T1), this protein is 2,3,4,5-tetrahydropyridine-2,6-dicarboxylate N-succinyltransferase.